The sequence spans 256 residues: 5'-nucleotidase SurE (256 aa).

Aspartate 8, aspartate 9, serine 40, and asparagine 92 together coordinate a divalent metal cation.

It belongs to the SurE nucleotidase family. It depends on a divalent metal cation as a cofactor.

The protein localises to the cytoplasm. It carries out the reaction a ribonucleoside 5'-phosphate + H2O = a ribonucleoside + phosphate. Nucleotidase that shows phosphatase activity on nucleoside 5'-monophosphates. In Sinorhizobium medicae (strain WSM419) (Ensifer medicae), this protein is 5'-nucleotidase SurE.